Reading from the N-terminus, the 520-residue chain is Cysteine--tRNA ligase (520 aa).

Position 29 (cysteine 29) interacts with Zn(2+). Residues 31-41 (PTVYNYPHLGN) carry the 'HIGH' region motif. The Zn(2+) site is built by cysteine 227, histidine 252, and glutamate 256. Positions 301 to 305 (KMSKS) match the 'KMSKS' region motif. Lysine 304 provides a ligand contact to ATP.

The protein belongs to the class-I aminoacyl-tRNA synthetase family. As to quaternary structure, monomer. It depends on Zn(2+) as a cofactor.

It is found in the cytoplasm. The enzyme catalyses tRNA(Cys) + L-cysteine + ATP = L-cysteinyl-tRNA(Cys) + AMP + diphosphate. This is Cysteine--tRNA ligase (cysS) from Treponema pallidum (strain Nichols).